We begin with the raw amino-acid sequence, 454 residues long: MSHNDTIVAQATPPGRGGVGILRISGLKARDVAQEVLGKLPKPRYADYLPFKDVDGSALDQGIALWFPGPNSFTGEDVLELQGHGGPVILDLLLKRILTLPGVRIARPGEFSERAFLNDKLDLAQAEAIADLIDASSEQAARSALNSLQGAFSARVNHLVEALTHLRIYVEAAIDFPDEEIDFLSDGKIEAQLNGVIADLDAVRTEARQGSLLREGMKVVIAGRPNAGKSSLLNALAGREAAIVTDIAGTTRDVLREHIHIDGMPLHIIDTAGLRDASDEVERIGIERAWQEIEQADRVLFMVDGTTTDAVDPADIWPDFIARLPKNLPITVVRNKADITGETLGISEVNGHSLVRLSARTGEGVDVLRNHLKQSMGFDTNMEGGFLARRRHLQALAEAAEHLEQGKAQLLGAWAGELLAEELRLAQQSLSEITGEFTSDDLLGRIFSSFCIGK.

Positions 23, 80, and 120 each coordinate (6S)-5-formyl-5,6,7,8-tetrahydrofolate. One can recognise a TrmE-type G domain in the interval 216–377 (GMKVVIAGRP…LRNHLKQSMG (162 aa)). K(+) is bound at residue Asn226. Residues 226 to 231 (NAGKSS), 245 to 251 (TDIAGTT), 270 to 273 (DTAG), 335 to 338 (NKAD), and 358 to 360 (SAR) contribute to the GTP site. A Mg(2+)-binding site is contributed by Ser230. The K(+) site is built by Thr245, Ile247, and Thr250. Thr251 serves as a coordination point for Mg(2+). Lys454 serves as a coordination point for (6S)-5-formyl-5,6,7,8-tetrahydrofolate.

Belongs to the TRAFAC class TrmE-Era-EngA-EngB-Septin-like GTPase superfamily. TrmE GTPase family. Homodimer. Heterotetramer of two MnmE and two MnmG subunits. K(+) serves as cofactor.

The protein resides in the cytoplasm. Exhibits a very high intrinsic GTPase hydrolysis rate. Involved in the addition of a carboxymethylaminomethyl (cmnm) group at the wobble position (U34) of certain tRNAs, forming tRNA-cmnm(5)s(2)U34. The protein is tRNA modification GTPase MnmE of Salmonella choleraesuis (strain SC-B67).